We begin with the raw amino-acid sequence, 961 residues long: Alanine--tRNA ligase, chloroplastic/mitochondrial (961 aa).

Zn(2+) is bound by residues His641, His645, Cys743, and His747.

Belongs to the class-II aminoacyl-tRNA synthetase family. As to quaternary structure, monomer. Zn(2+) serves as cofactor.

The protein localises to the plastid. It localises to the chloroplast. It is found in the mitochondrion. It carries out the reaction tRNA(Ala) + L-alanine + ATP = L-alanyl-tRNA(Ala) + AMP + diphosphate. Its function is as follows. Catalyzes the attachment of alanine to tRNA(Ala) in a two-step reaction: alanine is first activated by ATP to form Ala-AMP and then transferred to the acceptor end of tRNA(Ala). Also edits incorrectly charged tRNA(Ala) via its editing domain. The sequence is that of Alanine--tRNA ligase, chloroplastic/mitochondrial from Sorghum bicolor (Sorghum).